The primary structure comprises 352 residues: tRNA-specific 2-thiouridylase MnmA (352 aa).

ATP contacts are provided by residues 7–14 (GLSGGVDS) and L33. C94 acts as the Nucleophile in catalysis. A disulfide bond links C94 and C193. G119 serves as a coordination point for ATP. An interaction with tRNA region spans residues 143 to 145 (KDQ). C193 serves as the catalytic Cysteine persulfide intermediate. An interaction with tRNA region spans residues 298–299 (RY).

It belongs to the MnmA/TRMU family.

It is found in the cytoplasm. The catalysed reaction is S-sulfanyl-L-cysteinyl-[protein] + uridine(34) in tRNA + AH2 + ATP = 2-thiouridine(34) in tRNA + L-cysteinyl-[protein] + A + AMP + diphosphate + H(+). Its function is as follows. Catalyzes the 2-thiolation of uridine at the wobble position (U34) of tRNA, leading to the formation of s(2)U34. In Microcystis aeruginosa (strain NIES-843 / IAM M-2473), this protein is tRNA-specific 2-thiouridylase MnmA.